Consider the following 302-residue polypeptide: MILLNNSERLLALFKSLARSIPESLKVYGSLFHINHGNPFNMEVLVDSWPEYQMVIIRPQKQEMTDDMDSYTNVYRVFSKDPQKSQEVLKNSEIINWKQKLQIQGFQESLGEGIRAAAFSNSVKVEHSRALLFVTEDILKLYATNKSKLGSWAETGHPDDELESETPNFKYAQLNVSYSGLVNDNWKLGMNKRSLRYIKRCLGALPAACMLGPEGVPVSWVTMDPSCEIGMGYSVEKYRRRGNGTRLIMRCMKYLCQKNIPFYGSVLEENQGVIRKTSALGFLEASCQWHQWNCYPQNLVPL.

The protein belongs to the glycine N-acyltransferase family.

It catalyses the reaction an acyl-CoA + L-glutamine = an N(2)-acyl-L-glutamine + CoA + H(+). In terms of biological role, putative acyltransferase which transfers an acyl group to the N-terminus of glutamine. Can use phenylacetyl-CoA as an acyl donor. The polypeptide is Putative glycine N-acyltransferase-like protein 1B (Homo sapiens (Human)).